Reading from the N-terminus, the 827-residue chain is Leucine--tRNA ligase (827 aa).

Positions P46–H56 match the 'HIGH' region motif. Positions K585–S589 match the 'KMSKS' region motif. K588 lines the ATP pocket.

This sequence belongs to the class-I aminoacyl-tRNA synthetase family.

Its subcellular location is the cytoplasm. The enzyme catalyses tRNA(Leu) + L-leucine + ATP = L-leucyl-tRNA(Leu) + AMP + diphosphate. The chain is Leucine--tRNA ligase from Desulfotalea psychrophila (strain LSv54 / DSM 12343).